The following is a 67-amino-acid chain: SPbeta prophage-derived uncharacterized protein YoqK (67 aa).

The chain is SPbeta prophage-derived uncharacterized protein YoqK (yoqK) from Bacillus subtilis (strain 168).